The sequence spans 132 residues: MAFDGTWKVDRSENYEKFMEVMGVNIVKRKLGAHDNLKVIIQQDGNNFTVKESSTFRNIEIKFTLAQPFEYSLADGTELNGAWFLQDNQLLGTFTRKDNGKVLQTTRQIIGDELVQTYEYEGTESKRIFKRG.

Residue A2 is modified to N-acetylalanine. Hexadecanoate is bound by residues W83 and R107. Tetradecanoate-binding residues include W83 and R107.

It belongs to the calycin superfamily. Fatty-acid binding protein (FABP) family.

Its subcellular location is the cytoplasm. Its function is as follows. FABPs are thought to play a role in the intracellular transport of long-chain fatty acids and their acyl-CoA esters. The protein is Fatty acid-binding protein, intestinal (fabp2) of Xenopus laevis (African clawed frog).